A 38-amino-acid polypeptide reads, in one-letter code: Photosystem I reaction center subunit IX (38 aa).

Residues 4 to 24 form a helical membrane-spanning segment; the sequence is FLTTAPVVAAIWFTLTAGILI.

Belongs to the PsaJ family.

It localises to the cellular thylakoid membrane. May help in the organization of the PsaE and PsaF subunits. The chain is Photosystem I reaction center subunit IX from Parasynechococcus marenigrum (strain WH8102).